Consider the following 354-residue polypeptide: 3-dehydroquinate synthase (354 aa).

NAD(+) contacts are provided by residues 69-74 (DGEAEK), 103-107 (GVIGD), 127-128 (TS), lysine 140, and lysine 149. The Zn(2+) site is built by glutamate 182, histidine 245, and histidine 262.

Belongs to the sugar phosphate cyclases superfamily. Dehydroquinate synthase family. The cofactor is Co(2+). Requires Zn(2+) as cofactor. It depends on NAD(+) as a cofactor.

It is found in the cytoplasm. It carries out the reaction 7-phospho-2-dehydro-3-deoxy-D-arabino-heptonate = 3-dehydroquinate + phosphate. It functions in the pathway metabolic intermediate biosynthesis; chorismate biosynthesis; chorismate from D-erythrose 4-phosphate and phosphoenolpyruvate: step 2/7. In terms of biological role, catalyzes the conversion of 3-deoxy-D-arabino-heptulosonate 7-phosphate (DAHP) to dehydroquinate (DHQ). This chain is 3-dehydroquinate synthase, found in Colwellia psychrerythraea (strain 34H / ATCC BAA-681) (Vibrio psychroerythus).